Reading from the N-terminus, the 1709-residue chain is Sialoadhesin (1709 aa).

A signal peptide spans 1-19 (MGFLPKLLLLASFFPAGQA). The 117-residue stretch at 20-136 (SWGVSSPQDV…DVKGTLVTVT (117 aa)) folds into the Ig-like V-type domain. Residues 20–1641 (SWGVSSPQDV…ALHRLHQFQQ (1622 aa)) are Extracellular-facing. Cystine bridges form between Cys-36–Cys-166, Cys-41–Cys-98, Cys-160–Cys-217, and Cys-262–Cys-305. N-acetylneuraminate contacts are provided by residues Tyr-63, Arg-116, and 122–126 (VNRWS). 12 Ig-like C2-type domains span residues 139 to 233 (PRVP…IHLQ), 238 to 320 (PKGV…PPIS), 326 to 405 (AEVQ…GPVS), 411 to 507 (PPLT…LDFH), 511 to 593 (ARLL…AVLT), 601 to 705 (PTFT…ATFN), 708 to 785 (ATVL…AQLS), 799 to 894 (PKLS…FQVR), 898 to 977 (VQVS…APIS), 984 to 1083 (PRHV…ADFD), 1085 to 1165 (QAVN…RPIT), and 1176 to 1248 (RLTY…SPLG). Asn-159 carries N-linked (GlcNAc...) asparagine glycosylation. Residues Asn-265 and Asn-339 are each glycosylated (N-linked (GlcNAc...) asparagine). 2 disulfides stabilise this stretch: Cys-346/Cys-390 and Cys-433/Cys-491. Asn-499 carries N-linked (GlcNAc...) asparagine glycosylation. Intrachain disulfides connect Cys-531–Cys-575 and Cys-624–Cys-689. N-linked (GlcNAc...) asparagine glycans are attached at residues Asn-697, Asn-726, Asn-730, and Asn-741. Cystine bridges form between Cys-729/Cys-774 and Cys-817/Cys-876. Asn-886 carries N-linked (GlcNAc...) asparagine glycosylation. Cystine bridges form between Cys-916–Cys-960 and Cys-1005–Cys-1067. N-linked (GlcNAc...) asparagine glycosylation is found at Asn-1104 and Asn-1138. Intrachain disulfides connect Cys-1107–Cys-1149 and Cys-1193–Cys-1241. The N-linked (GlcNAc...) asparagine glycan is linked to Asn-1251. Ig-like C2-type domains lie at 1259–1341 (EGVR…AALQ), 1350–1442 (VLSS…RLQV), 1445–1528 (ARVV…VMLR), and 1536–1631 (PTMM…FGVR). 2 cysteine pairs are disulfide-bonded: Cys-1281–Cys-1324 and Cys-1367–Cys-1425. N-linked (GlcNAc...) asparagine glycosylation is found at Asn-1462 and Asn-1476. Cystine bridges form between Cys-1465/Cys-1511 and Cys-1554/Cys-1613. Residues 1642 to 1662 (LLWVLGLLVGLLLLLLGLGAC) form a helical membrane-spanning segment. At 1663–1709 (YTWRRRRVCKQSMGENSVEMAFQKETTQLIDPDAATCETSTCAPPLG) the chain is on the cytoplasmic side.

It belongs to the immunoglobulin superfamily. SIGLEC (sialic acid binding Ig-like lectin) family. Interacts with TYROBP. Interacts with CLEC10A. As to expression, expressed by macrophages in various tissues. High levels are found in spleen, lymph node, perivascular macrophages in brain and lower levels in bone marrow, liver Kupffer cells and lamina propria of colon and lung. Also expressed by inflammatory macrophages in rheumatoid arthritis.

The protein localises to the cell membrane. It localises to the secreted. Functionally, macrophage-restricted adhesion molecule that mediates sialic-acid dependent binding to lymphocytes, including granulocytes, monocytes, natural killer cells, B-cells and CD8 T-cells. Plays a crucial role in limiting bacterial dissemination by engaging sialylated bacteria to promote effective phagocytosis and antigen presentation for the adaptive immune response. Mediates the uptake of various enveloped viruses via sialic acid recognition and subsequently induces the formation of intracellular compartments filled with virions (VCCs). In turn, enhances macrophage-to-T-cell transmission of several viruses including HIV-1 or SARS-CoV-2. Acts as an endocytic receptor mediating clathrin dependent endocytosis. Preferentially binds to alpha-2,3-linked sialic acid. Binds to SPN/CD43 on T-cells. May play a role in hemopoiesis. Plays a role in the inhibition of antiviral innate immune by promoting TBK1 degradation via TYROBP and TRIM27-mediated ubiquitination. In terms of biological role, (Microbial infection) Facilitates viral cytoplasmic entry into activated dendritic cells via recognition of sialylated gangliosides pesent on viral membrane. This is Sialoadhesin (SIGLEC1) from Homo sapiens (Human).